The primary structure comprises 77 residues: UPF0213 protein VNG_2274C (77 aa).

A GIY-YIG domain is found at 1–75 (MHHVYVIECS…KQLSRAQKEA (75 aa)).

The protein belongs to the UPF0213 family.

The chain is UPF0213 protein VNG_2274C from Halobacterium salinarum (strain ATCC 700922 / JCM 11081 / NRC-1) (Halobacterium halobium).